The sequence spans 97 residues: Late embryogenesis abundant protein Lea5 (97 aa).

Belongs to the LEA type 3 family.

This is Late embryogenesis abundant protein Lea5 (LEA5) from Citrus sinensis (Sweet orange).